The following is a 380-amino-acid chain: Bifunctional enzyme IspD/IspF (380 aa).

Residues 1–224 are 2-C-methyl-D-erythritol 4-phosphate cytidylyltransferase; it reads MTIPATYAAI…ERILGDAMDI (224 aa). The interval 225–380 is 2-C-methyl-D-erythritol 2,4-cyclodiphosphate synthase; it reads RLGNGFDVHA…SIATATLVKG (156 aa). A divalent metal cation-binding residues include Asp231 and His233. 4-CDP-2-C-methyl-D-erythritol 2-phosphate is bound by residues 231 to 233 and 257 to 258; these read DVH and HS. His265 contributes to the a divalent metal cation binding site. Residues 279 to 281, 355 to 358, Phe362, and Arg365 contribute to the 4-CDP-2-C-methyl-D-erythritol 2-phosphate site; these read DIG and TTSE.

This sequence in the N-terminal section; belongs to the IspD/TarI cytidylyltransferase family. IspD subfamily. In the C-terminal section; belongs to the IspF family. Requires a divalent metal cation as cofactor.

The enzyme catalyses 2-C-methyl-D-erythritol 4-phosphate + CTP + H(+) = 4-CDP-2-C-methyl-D-erythritol + diphosphate. It catalyses the reaction 4-CDP-2-C-methyl-D-erythritol 2-phosphate = 2-C-methyl-D-erythritol 2,4-cyclic diphosphate + CMP. Its pathway is isoprenoid biosynthesis; isopentenyl diphosphate biosynthesis via DXP pathway; isopentenyl diphosphate from 1-deoxy-D-xylulose 5-phosphate: step 2/6. It participates in isoprenoid biosynthesis; isopentenyl diphosphate biosynthesis via DXP pathway; isopentenyl diphosphate from 1-deoxy-D-xylulose 5-phosphate: step 4/6. Functionally, bifunctional enzyme that catalyzes the formation of 4-diphosphocytidyl-2-C-methyl-D-erythritol from CTP and 2-C-methyl-D-erythritol 4-phosphate (MEP) (IspD), and catalyzes the conversion of 4-diphosphocytidyl-2-C-methyl-D-erythritol 2-phosphate (CDP-ME2P) to 2-C-methyl-D-erythritol 2,4-cyclodiphosphate (ME-CPP) with a corresponding release of cytidine 5-monophosphate (CMP) (IspF). This Paracoccus denitrificans (strain Pd 1222) protein is Bifunctional enzyme IspD/IspF.